The chain runs to 274 residues: Large ribosomal subunit protein uL2cz/uL2cy (274 aa).

2 disordered regions span residues 1–25 (MAIH…VKSN) and 224–274 (NPVD…RRSK).

It belongs to the universal ribosomal protein uL2 family. Part of the 50S ribosomal subunit.

The protein resides in the plastid. It localises to the chloroplast. This is Large ribosomal subunit protein uL2cz/uL2cy (rpl2-A) from Aethionema cordifolium (Lebanon stonecress).